The chain runs to 366 residues: Tetraacyldisaccharide 4'-kinase (366 aa).

An ATP-binding site is contributed by 51-58; that stretch reads TVGGTGKT.

It belongs to the LpxK family.

It carries out the reaction a lipid A disaccharide + ATP = a lipid IVA + ADP + H(+). It participates in glycolipid biosynthesis; lipid IV(A) biosynthesis; lipid IV(A) from (3R)-3-hydroxytetradecanoyl-[acyl-carrier-protein] and UDP-N-acetyl-alpha-D-glucosamine: step 6/6. Its function is as follows. Transfers the gamma-phosphate of ATP to the 4'-position of a tetraacyldisaccharide 1-phosphate intermediate (termed DS-1-P) to form tetraacyldisaccharide 1,4'-bis-phosphate (lipid IVA). This Phocaeicola vulgatus (strain ATCC 8482 / DSM 1447 / JCM 5826 / CCUG 4940 / NBRC 14291 / NCTC 11154) (Bacteroides vulgatus) protein is Tetraacyldisaccharide 4'-kinase.